Here is a 318-residue protein sequence, read N- to C-terminus: Acetyl-coenzyme A carboxylase carboxyl transferase subunit alpha (318 aa).

In terms of domain architecture, CoA carboxyltransferase C-terminal spans 34-295; the sequence is SIEEEITKLR…KATIKQQLAQ (262 aa).

It belongs to the AccA family. Acetyl-CoA carboxylase is a heterohexamer composed of biotin carboxyl carrier protein (AccB), biotin carboxylase (AccC) and two subunits each of ACCase subunit alpha (AccA) and ACCase subunit beta (AccD).

It localises to the cytoplasm. It carries out the reaction N(6)-carboxybiotinyl-L-lysyl-[protein] + acetyl-CoA = N(6)-biotinyl-L-lysyl-[protein] + malonyl-CoA. It participates in lipid metabolism; malonyl-CoA biosynthesis; malonyl-CoA from acetyl-CoA: step 1/1. Its function is as follows. Component of the acetyl coenzyme A carboxylase (ACC) complex. First, biotin carboxylase catalyzes the carboxylation of biotin on its carrier protein (BCCP) and then the CO(2) group is transferred by the carboxyltransferase to acetyl-CoA to form malonyl-CoA. The sequence is that of Acetyl-coenzyme A carboxylase carboxyl transferase subunit alpha from Pseudoalteromonas atlantica (strain T6c / ATCC BAA-1087).